The primary structure comprises 321 residues: Lipoyl synthase (321 aa).

7 residues coordinate [4Fe-4S] cluster: Cys68, Cys73, Cys79, Cys94, Cys98, Cys101, and Ser308. Residues 80–297 (FNHGTATFMI…KAEAMAMGFT (218 aa)) form the Radical SAM core domain.

Belongs to the radical SAM superfamily. Lipoyl synthase family. It depends on [4Fe-4S] cluster as a cofactor.

It is found in the cytoplasm. The catalysed reaction is [[Fe-S] cluster scaffold protein carrying a second [4Fe-4S](2+) cluster] + N(6)-octanoyl-L-lysyl-[protein] + 2 oxidized [2Fe-2S]-[ferredoxin] + 2 S-adenosyl-L-methionine + 4 H(+) = [[Fe-S] cluster scaffold protein] + N(6)-[(R)-dihydrolipoyl]-L-lysyl-[protein] + 4 Fe(3+) + 2 hydrogen sulfide + 2 5'-deoxyadenosine + 2 L-methionine + 2 reduced [2Fe-2S]-[ferredoxin]. It participates in protein modification; protein lipoylation via endogenous pathway; protein N(6)-(lipoyl)lysine from octanoyl-[acyl-carrier-protein]: step 2/2. Its function is as follows. Catalyzes the radical-mediated insertion of two sulfur atoms into the C-6 and C-8 positions of the octanoyl moiety bound to the lipoyl domains of lipoate-dependent enzymes, thereby converting the octanoylated domains into lipoylated derivatives. The sequence is that of Lipoyl synthase from Enterobacter sp. (strain 638).